Here is a 418-residue protein sequence, read N- to C-terminus: Tryptophan synthase beta chain (418 aa).

The segment covering 1–17 (MTSTLPNASTPDPSSLQ) has biased composition (polar residues). A disordered region spans residues 1-23 (MTSTLPNASTPDPSSLQPAVRPG). Lys111 is modified (N6-(pyridoxal phosphate)lysine).

Belongs to the TrpB family. In terms of assembly, tetramer of two alpha and two beta chains. Pyridoxal 5'-phosphate serves as cofactor.

It carries out the reaction (1S,2R)-1-C-(indol-3-yl)glycerol 3-phosphate + L-serine = D-glyceraldehyde 3-phosphate + L-tryptophan + H2O. The protein operates within amino-acid biosynthesis; L-tryptophan biosynthesis; L-tryptophan from chorismate: step 5/5. In terms of biological role, the beta subunit is responsible for the synthesis of L-tryptophan from indole and L-serine. This is Tryptophan synthase beta chain from Synechococcus sp. (strain CC9605).